We begin with the raw amino-acid sequence, 141 residues long: Large ribosomal subunit protein uL11 (141 aa).

This sequence belongs to the universal ribosomal protein uL11 family. In terms of assembly, part of the ribosomal stalk of the 50S ribosomal subunit. Interacts with L10 and the large rRNA to form the base of the stalk. L10 forms an elongated spine to which L12 dimers bind in a sequential fashion forming a multimeric L10(L12)X complex. One or more lysine residues are methylated.

Forms part of the ribosomal stalk which helps the ribosome interact with GTP-bound translation factors. The chain is Large ribosomal subunit protein uL11 from Natranaerobius thermophilus (strain ATCC BAA-1301 / DSM 18059 / JW/NM-WN-LF).